We begin with the raw amino-acid sequence, 241 residues long: Uridylate kinase (241 aa).

13–16 (KVSG) contributes to the ATP binding site. Residue glycine 55 participates in UMP binding. 2 residues coordinate ATP: glycine 56 and arginine 60. Residues aspartate 75 and 136–143 (TGNPFFTT) each bind UMP. ATP contacts are provided by threonine 163, glutamine 164, tyrosine 169, and aspartate 172.

This sequence belongs to the UMP kinase family. In terms of assembly, homohexamer.

The protein resides in the cytoplasm. It carries out the reaction UMP + ATP = UDP + ADP. Its pathway is pyrimidine metabolism; CTP biosynthesis via de novo pathway; UDP from UMP (UMPK route): step 1/1. With respect to regulation, inhibited by UTP. Functionally, catalyzes the reversible phosphorylation of UMP to UDP. This Parvibaculum lavamentivorans (strain DS-1 / DSM 13023 / NCIMB 13966) protein is Uridylate kinase.